The primary structure comprises 146 residues: UPF0260 protein Ssed_2516 (146 aa).

This sequence belongs to the UPF0260 family.

In Shewanella sediminis (strain HAW-EB3), this protein is UPF0260 protein Ssed_2516.